A 265-amino-acid polypeptide reads, in one-letter code: Undecaprenyl-diphosphatase (265 aa).

Transmembrane regions (helical) follow at residues 1 to 21 (MDWL…FLPI), 40 to 60 (GLAF…LAFH), 87 to 107 (WAVI…ENVI), 113 to 133 (ASLV…WADV), 151 to 173 (IIGF…TITA), 188 to 208 (SFLL…VELI), 214 to 234 (VAWG…WLCI), and 244 to 264 (IGML…LVWV).

This sequence belongs to the UppP family.

It localises to the cell inner membrane. It carries out the reaction di-trans,octa-cis-undecaprenyl diphosphate + H2O = di-trans,octa-cis-undecaprenyl phosphate + phosphate + H(+). Functionally, catalyzes the dephosphorylation of undecaprenyl diphosphate (UPP). Confers resistance to bacitracin. This Chromohalobacter salexigens (strain ATCC BAA-138 / DSM 3043 / CIP 106854 / NCIMB 13768 / 1H11) protein is Undecaprenyl-diphosphatase.